The chain runs to 333 residues: Structure-specific endonuclease subunit SLX1 homolog (333 aa).

One can recognise a GIY-YIG domain in the interval 68–157 (DFFGVYCLLS…KSRRLRLLNL (90 aa)). Residues 237–293 (CSLCLKPILSISELLRCHANETCKSHFHMRCLSKHALNAVDEYRTSLFPIQGQCPKC) form an SLX1-type zinc finger.

It belongs to the SLX1 family. In terms of assembly, forms a heterodimer with a member of the SLX4 family. A divalent metal cation serves as cofactor.

It localises to the nucleus. In terms of biological role, catalytic subunit of a heterodimeric structure-specific endonuclease that resolves DNA secondary structures generated during DNA repair and recombination. Has endonuclease activity towards branched DNA substrates, introducing single-strand cuts in duplex DNA close to junctions with ss-DNA. The chain is Structure-specific endonuclease subunit SLX1 homolog from Brugia malayi (Filarial nematode worm).